A 32-amino-acid polypeptide reads, in one-letter code: Photosystem II reaction center protein T (32 aa).

Residues 3–23 (SIAYVLIFACLIGLFFFAIFF) traverse the membrane as a helical segment.

It belongs to the PsbT family. In terms of assembly, PSII is composed of 1 copy each of membrane proteins PsbA, PsbB, PsbC, PsbD, PsbE, PsbF, PsbH, PsbI, PsbJ, PsbK, PsbL, PsbM, PsbT, PsbX, PsbY, PsbZ, Psb30/Ycf12, peripheral proteins PsbO, CyanoQ (PsbQ), PsbU, PsbV and a large number of cofactors. It forms dimeric complexes.

It is found in the cellular thylakoid membrane. Found at the monomer-monomer interface of the photosystem II (PS II) dimer, plays a role in assembly and dimerization of PSII. PSII is a light-driven water plastoquinone oxidoreductase, using light energy to abstract electrons from H(2)O, generating a proton gradient subsequently used for ATP formation. In Cyanothece sp. (strain PCC 7425 / ATCC 29141), this protein is Photosystem II reaction center protein T.